A 270-amino-acid polypeptide reads, in one-letter code: Shikimate dehydrogenase (NADP(+)) (270 aa).

Shikimate-binding positions include 14-16 (SKS) and Thr61. Residue Lys65 is the Proton acceptor of the active site. Positions 86 and 101 each coordinate shikimate. Residues 126-130 (GAGGA), 150-155 (NRTVDK), and Met215 each bind NADP(+). Residue Tyr217 coordinates shikimate. NADP(+) is bound at residue Gly238.

The protein belongs to the shikimate dehydrogenase family. In terms of assembly, homodimer.

It carries out the reaction shikimate + NADP(+) = 3-dehydroshikimate + NADPH + H(+). The protein operates within metabolic intermediate biosynthesis; chorismate biosynthesis; chorismate from D-erythrose 4-phosphate and phosphoenolpyruvate: step 4/7. In terms of biological role, involved in the biosynthesis of the chorismate, which leads to the biosynthesis of aromatic amino acids. Catalyzes the reversible NADPH linked reduction of 3-dehydroshikimate (DHSA) to yield shikimate (SA). This chain is Shikimate dehydrogenase (NADP(+)), found in Methylobacillus flagellatus (strain ATCC 51484 / DSM 6875 / VKM B-1610 / KT).